We begin with the raw amino-acid sequence, 575 residues long: Transcription factor COE2 (575 aa).

The interaction with DNA stretch occupies residues 62–65 (RKSN). The C5-type zinc-finger motif lies at 150 to 169 (CRVLLTHEVMCSRCCEKKSC). 2 interaction with DNA regions span residues 196–203 (NCLKTAGN) and 235–238 (NNSK). The region spanning 253–336 (PCIKAISPSE…KGAPGRFIYT (84 aa)) is the IPT/TIG domain. Positions 441-453 (STQGNNQGYIRNT) are enriched in polar residues. Residues 441–479 (STQGNNQGYIRNTSSISPRGYSSSSTPQQSNYSTSSNSM) are disordered. The segment covering 454–479 (SSISPRGYSSSSTPQQSNYSTSSNSM) has biased composition (low complexity).

It belongs to the COE family. In terms of assembly, forms either a homodimer or a heterodimer with a related family member. Interacts with SIX1.

The protein localises to the nucleus. Transcription factor that, in osteoblasts, activates the decoy receptor for RANKL, TNFRSF11B, which in turn regulates osteoclast differentiation. Acts in synergy with the Wnt-responsive LEF1/CTNNB1 pathway. Recognizes variations of the palindromic sequence 5'-ATTCCCNNGGGAATT-3'. The chain is Transcription factor COE2 (EBF2) from Bos taurus (Bovine).